The sequence spans 310 residues: Glutaminase (310 aa).

Substrate contacts are provided by serine 66, asparagine 117, glutamate 161, asparagine 168, tyrosine 192, tyrosine 244, and valine 262. An N6-acetyllysine modification is found at lysine 294.

Belongs to the glutaminase family. As to quaternary structure, homotetramer.

The catalysed reaction is L-glutamine + H2O = L-glutamate + NH4(+). This Escherichia coli O81 (strain ED1a) protein is Glutaminase.